We begin with the raw amino-acid sequence, 234 residues long: 5'-methylthioadenosine/S-adenosylhomocysteine nucleosidase (234 aa).

The active-site Proton acceptor is the E12. Substrate is bound by residues G78, I152, and 173-174; that span reads ME. D197 (proton donor) is an active-site residue.

The protein belongs to the PNP/UDP phosphorylase family. MtnN subfamily.

The enzyme catalyses S-adenosyl-L-homocysteine + H2O = S-(5-deoxy-D-ribos-5-yl)-L-homocysteine + adenine. It catalyses the reaction S-methyl-5'-thioadenosine + H2O = 5-(methylsulfanyl)-D-ribose + adenine. It carries out the reaction 5'-deoxyadenosine + H2O = 5-deoxy-D-ribose + adenine. The protein operates within amino-acid biosynthesis; L-methionine biosynthesis via salvage pathway; S-methyl-5-thio-alpha-D-ribose 1-phosphate from S-methyl-5'-thioadenosine (hydrolase route): step 1/2. In terms of biological role, catalyzes the irreversible cleavage of the glycosidic bond in both 5'-methylthioadenosine (MTA) and S-adenosylhomocysteine (SAH/AdoHcy) to adenine and the corresponding thioribose, 5'-methylthioribose and S-ribosylhomocysteine, respectively. Also cleaves 5'-deoxyadenosine, a toxic by-product of radical S-adenosylmethionine (SAM) enzymes, into 5-deoxyribose and adenine. The sequence is that of 5'-methylthioadenosine/S-adenosylhomocysteine nucleosidase from Desulfotalea psychrophila (strain LSv54 / DSM 12343).